The following is a 467-amino-acid chain: Chromosomal replication initiator protein DnaA (467 aa).

The domain I, interacts with DnaA modulators stretch occupies residues 1–87 (MSSSLWLQCL…VGSRPVVAPK (87 aa)). The domain II stretch occupies residues 87–130 (KPAPVRTAADVAAESSAPAQLAQRKPIHKTWDDDSAAADITHRS). Residues 131-347 (NVNPKHKFNN…GALNRVIANA (217 aa)) form a domain III, AAA+ region region. ATP contacts are provided by G175, G177, K178, and T179. Residues 348-467 (NFTGRPITID…YSNLIRTLSS (120 aa)) are domain IV, binds dsDNA.

The protein belongs to the DnaA family. Oligomerizes as a right-handed, spiral filament on DNA at oriC.

The protein resides in the cytoplasm. Its function is as follows. Plays an essential role in the initiation and regulation of chromosomal replication. ATP-DnaA binds to the origin of replication (oriC) to initiate formation of the DNA replication initiation complex once per cell cycle. Binds the DnaA box (a 9 base pair repeat at the origin) and separates the double-stranded (ds)DNA. Forms a right-handed helical filament on oriC DNA; dsDNA binds to the exterior of the filament while single-stranded (ss)DNA is stabiized in the filament's interior. The ATP-DnaA-oriC complex binds and stabilizes one strand of the AT-rich DNA unwinding element (DUE), permitting loading of DNA polymerase. After initiation quickly degrades to an ADP-DnaA complex that is not apt for DNA replication. Binds acidic phospholipids. The sequence is that of Chromosomal replication initiator protein DnaA from Vibrio cholerae serotype O1 (strain ATCC 39315 / El Tor Inaba N16961).